The chain runs to 98 residues: NADH-ubiquinone oxidoreductase chain 4L (98 aa).

3 helical membrane passes run 1-21 (MSLVYMNIMMAFTVSLTGLLM), 29-49 (SLLCLEGMMLSLFILATLMIL), and 61-81 (IILLVFAACEAALGLSLLVMV).

Belongs to the complex I subunit 4L family. Core subunit of respiratory chain NADH dehydrogenase (Complex I) which is composed of 45 different subunits.

Its subcellular location is the mitochondrion inner membrane. The enzyme catalyses a ubiquinone + NADH + 5 H(+)(in) = a ubiquinol + NAD(+) + 4 H(+)(out). In terms of biological role, core subunit of the mitochondrial membrane respiratory chain NADH dehydrogenase (Complex I) which catalyzes electron transfer from NADH through the respiratory chain, using ubiquinone as an electron acceptor. Part of the enzyme membrane arm which is embedded in the lipid bilayer and involved in proton translocation. This is NADH-ubiquinone oxidoreductase chain 4L (MT-ND4L) from Ovis aries (Sheep).